Consider the following 366-residue polypeptide: A-type ATP synthase subunit C (366 aa).

Belongs to the V-ATPase V0D/AC39 subunit family. Has multiple subunits with at least A(3), B(3), C, D, E, F, H, I and proteolipid K(x).

It is found in the cell membrane. Functionally, component of the A-type ATP synthase that produces ATP from ADP in the presence of a proton gradient across the membrane. This chain is A-type ATP synthase subunit C, found in Thermococcus onnurineus (strain NA1).